Reading from the N-terminus, the 607-residue chain is MDFLSALENAENHIVSALPGDAVCLRPNSSRPQETPQAHSSKLSPSYPASNRSVLGLCFPTSRMPETIKEPPCKGAMFLRPVSISSSSSGSQQRMTGTKVSQESSGRQSSAAHSGFIFESCQHGIGDFETLDQDEFDKALASMEFEGAGLEPEVNRGASQILPAKHCEDPVLAKKARVADLSGSFQEGPIVHCRKPWPSLRPTTATGGLPVPATSDISTSHQRGSPVPAPQYSPVAGRTLQNGPQNYVPGQPLQSPRAWSSGKPRFSGPQCPHSSSAAFCRGPSPSRAPVSSVESPFSTPRSTSTTVTQPALQTPVVTNHLVQLVTATNRTPQQPSRPSIRAKTRRFPGPAGLLPHQHSGENLEEIMVSTPQTPTHGALAKFQTEIVTSSQGSVEEDFGRGPWLTMKSALGLDEGDPTCFLYTYSIVMVLRKAALKQLPRNKVPNMAVMIKSLTRSTMDASVVFKDPTGEMLGTVHRVLLETHQNELKPGSVLLLKQIGVFSPSLRNHYLNVTPNNLVHIYSLDSGDGDFLKPPQPLPKDLGNSHGSLQPDVAAEPTQGLRTAQNPPASPEEELPEADDLDGLLSELPEDFFCEPSGWSCLKTGHPP.

4 disordered regions span residues 25-49 (LRPNSSRPQETPQAHSSKLSPSYPA), 84-108 (ISSSSSGSQQRMTGTKVSQESSGRQ), 196-308 (PWPS…TTVT), and 531-581 (LKPP…DDLD). Polar residues-rich tracts occupy residues 27 to 49 (PNSSRPQETPQAHSSKLSPSYPA) and 92 to 108 (QQRMTGTKVSQESSGRQ). Serine 30 is modified (phosphoserine). Arginine 281 is modified (asymmetric dimethylarginine). Positions 295 to 308 (SPFSTPRSTSTTVT) are enriched in low complexity. The segment covering 570-581 (PEEELPEADDLD) has biased composition (acidic residues).

Interacts with MCM8; this interaction is necessary for MCM8-MCM9 helicase complex recruitment to DNA damage sites. Interacts with RPA1; this interaction associates HROB with the RPA complex.

The protein localises to the nucleus. Its subcellular location is the chromosome. In terms of biological role, DNA-binding protein involved in homologous recombination that acts by recruiting the MCM8-MCM9 helicase complex to sites of DNA damage to promote DNA repair synthesis. The protein is Homologous recombination OB-fold protein of Rattus norvegicus (Rat).